The primary structure comprises 258 residues: uncharacterized protein (258 aa).

3 Solcar repeats span residues 9–78, 81–160, and 165–246; these read KPIL…AKAR, PGVR…FKKK, and DHVF…VKSH. Helical transmembrane passes span 11–31, 53–73, 87–107, 139–159, 171–191, and 218–239; these read ILVG…LSTI, GLSS…FVYE, LVSA…AEVV, MCGR…QFKK, PKGA…LDVI, and FEKG…YLGT.

It belongs to the mitochondrial carrier (TC 2.A.29) family.

Its subcellular location is the mitochondrion inner membrane. This is an uncharacterized protein from Schizosaccharomyces pombe (strain 972 / ATCC 24843) (Fission yeast).